Consider the following 727-residue polypeptide: ABC transporter G family member 6 (727 aa).

The region spanning 68 to 333 (LSFTDLTYSV…FAEFGHPIPE (266 aa)) is the ABC transporter domain. 126–133 (GASGSGKS) contacts ATP. The region spanning 421 to 631 (VELAVLAKRS…PYEAVLLNEF (211 aa)) is the ABC transmembrane type-2 domain. Transmembrane regions (helical) follow at residues 440–460 (LFGIRLGAVLVTGFILATMFW), 475–495 (CFAFAMSTTFYTCADALPVFL), 517–537 (LSHSLVALPSLIILSLAFAAI), 560–580 (ASFWAGSSFVTFLSGVVPHVM), 581–601 (LGYTIVVAILAYFLLFSGFFI), and 700–720 (LWVTVAWGFFFRILFYFSLLL).

Belongs to the ABC transporter superfamily. ABCG family. Eye pigment precursor importer (TC 3.A.1.204) subfamily.

It is found in the membrane. The chain is ABC transporter G family member 6 (ABCG6) from Arabidopsis thaliana (Mouse-ear cress).